The primary structure comprises 486 residues: 3-sulfolactaldehyde dehydrogenase (486 aa).

NADP(+) is bound by residues 157 to 158 (WN), 181 to 184 (RPAS), and 234 to 235 (GS). Glutamate 256 (proton acceptor) is an active-site residue. Leucine 257 is an NADP(+) binding site. Catalysis depends on cysteine 290, which acts as the Nucleophile. Glutamate 387 contacts NADP(+).

This sequence belongs to the aldehyde dehydrogenase family.

The catalysed reaction is (2S)-3-sulfolactaldehyde + NADP(+) + H2O = (2S)-3-sulfolactate + NADPH + 2 H(+). The enzyme catalyses (2S)-3-sulfolactaldehyde + NAD(+) + H2O = (2S)-3-sulfolactate + NADH + 2 H(+). In terms of biological role, catalyzes the oxidation of (2S)-3-sulfolactaldehyde to (2S)-3-sulfolactate, using both NAD(+) and NADP(+) as electron acceptors. Is involved in a degradation pathway of sulfoquinovose (SQ) that allows P.putida SQ1 to use SQ as the sole carbon and energy source for growth. This Pseudomonas putida (Arthrobacter siderocapsulatus) protein is 3-sulfolactaldehyde dehydrogenase.